An 80-amino-acid polypeptide reads, in one-letter code: Omega-conotoxin-like PuIA (80 aa).

A signal peptide spans 1-22 (MKLTCVMIVAVLFLTAWTFVTA). A propeptide spanning residues 23–50 (DSIRALEDLFAKAPDEMENSGASPLNER) is cleaved from the precursor. Intrachain disulfides connect C52–C70, C59–C74, and C69–C78.

It belongs to the conotoxin O1 superfamily. Expressed by the venom duct.

It localises to the secreted. Its function is as follows. Omega-conotoxins act at presynaptic membranes, they bind and block voltage-gated calcium channels (Cav). The chain is Omega-conotoxin-like PuIA from Conus pulicarius (Flea-bitten cone).